The sequence spans 131 residues: Protein Bouncer (131 aa).

A signal peptide spans methionine 1–cysteine 26. Disulfide bonds link cysteine 31–cysteine 56, cysteine 50–cysteine 74, cysteine 80–cysteine 99, and cysteine 100–cysteine 105. Residues cysteine 31–asparagine 106 enclose the UPAR/Ly6 domain. The N-linked (GlcNAc...) asparagine glycan is linked to asparagine 65. The GPI-anchor amidated asparagine moiety is linked to residue asparagine 106. Residues arginine 107–threonine 131 constitute a propeptide, removed in mature form.

This sequence belongs to the SPACA4/bouncer family. In terms of assembly, interacts with spermatocyte complex composed of izumo1, spaca6 and tmem81. In terms of tissue distribution, expressed in oocytes. Not expressed in testis.

Its subcellular location is the cell membrane. Functionally, oocyte-expressed fertilization factor that mediates sperm-egg binding and is essential for sperm entry into the egg. Necessary and sufficient to mediate species-specific gamete recognition and fertilization, which is essential for vertebrate species performing external fertilization. External fertilization cannot guarantee that only conspecific sperm reaches the egg by precopulatory mate choice: proteins such as Bouncer can therefore support the selection of conspecific sperm. This chain is Protein Bouncer, found in Oryzias latipes (Japanese rice fish).